Consider the following 409-residue polypeptide: Putative actin-fragmin kinase DDB_G0268812 (409 aa).

Residues 1 to 45 (MKTFRDFKKKIKNNNNNKNNKNNNINNNNSNNNKNNKNNNNNNSN) are disordered. Positions 5–46 (RDFKKKIKNNNNNKNNKNNNINNNNSNNNKNNKNNNNNNSNN) form a coiled coil. The span at 13 to 45 (NNNNNKNNKNNNINNNNSNNNKNNKNNNNNNSN) shows a compositional bias: low complexity.

Belongs to the protein kinase superfamily. AFK Ser/Thr protein kinase family.

This chain is Putative actin-fragmin kinase DDB_G0268812, found in Dictyostelium discoideum (Social amoeba).